The sequence spans 313 residues: Putative S-adenosyl-L-methionine-dependent methyltransferase MMAR_0955 (313 aa).

S-adenosyl-L-methionine-binding positions include Asp-132 and 161-162 (DL).

The protein belongs to the UPF0677 family.

In terms of biological role, exhibits S-adenosyl-L-methionine-dependent methyltransferase activity. This chain is Putative S-adenosyl-L-methionine-dependent methyltransferase MMAR_0955, found in Mycobacterium marinum (strain ATCC BAA-535 / M).